The sequence spans 219 residues: Elongation factor Ts (219 aa).

An involved in Mg(2+) ion dislocation from EF-Tu region spans residues 83–86 (TDFV).

It belongs to the EF-Ts family.

Its subcellular location is the cytoplasm. In terms of biological role, associates with the EF-Tu.GDP complex and induces the exchange of GDP to GTP. It remains bound to the aminoacyl-tRNA.EF-Tu.GTP complex up to the GTP hydrolysis stage on the ribosome. This Synechococcus sp. (strain WH7803) protein is Elongation factor Ts.